Reading from the N-terminus, the 213-residue chain is ATP-dependent Clp protease proteolytic subunit (213 aa).

S114 acts as the Nucleophile in catalysis. H139 is an active-site residue.

This sequence belongs to the peptidase S14 family. Fourteen ClpP subunits assemble into 2 heptameric rings which stack back to back to give a disk-like structure with a central cavity, resembling the structure of eukaryotic proteasomes.

It localises to the cytoplasm. The enzyme catalyses Hydrolysis of proteins to small peptides in the presence of ATP and magnesium. alpha-casein is the usual test substrate. In the absence of ATP, only oligopeptides shorter than five residues are hydrolyzed (such as succinyl-Leu-Tyr-|-NHMec, and Leu-Tyr-Leu-|-Tyr-Trp, in which cleavage of the -Tyr-|-Leu- and -Tyr-|-Trp bonds also occurs).. Functionally, cleaves peptides in various proteins in a process that requires ATP hydrolysis. Has a chymotrypsin-like activity. Plays a major role in the degradation of misfolded proteins. The chain is ATP-dependent Clp protease proteolytic subunit from Pseudomonas syringae pv. syringae (strain B728a).